A 539-amino-acid chain; its full sequence is Putative cysteine ligase BshC (539 aa).

Residues 249 to 270 (VETNDEVTNRLNESQAAMKRAG) adopt a coiled-coil conformation.

This sequence belongs to the BshC family.

Functionally, involved in bacillithiol (BSH) biosynthesis. May catalyze the last step of the pathway, the addition of cysteine to glucosamine malate (GlcN-Mal) to generate BSH. This Bacillus pumilus (strain SAFR-032) protein is Putative cysteine ligase BshC.